The following is a 63-amino-acid chain: Parvalbumin alpha (63 aa).

EF-hand domains are found at residues 28–38 (IEEEELGLILK) and 39–63 (VLLA…LVSE). Positions 29, 32, 45, 47, 49, 51, and 56 each coordinate Ca(2+).

In terms of tissue distribution, detected in muscle and cutaneous mucus. In the skin, detected in cells in the basal region of the glandular epithelium of the dermal mucus glands (at protein level).

The protein localises to the cytoplasm. It localises to the secreted. Its function is as follows. In muscle, parvalbumin is thought to be involved in relaxation after contraction. It binds two calcium ions. This Rana temporaria (European common frog) protein is Parvalbumin alpha.